The primary structure comprises 296 residues: Phosphatidylcholine:diacylglycerol cholinephosphotransferase 2 (296 aa).

5 helical membrane passes run 83 to 103, 136 to 156, 165 to 182, 198 to 218, and 250 to 270; these read HWIP…EYTF, VLAA…GCTW, TIAA…GYST, PVGN…SMIA, and GHYT…DSLA. Residues His211, His251, and Asp255 contribute to the active site.

This sequence belongs to the phosphatidylcholine:diacylglycerol cholinephosphotransferase family.

Its subcellular location is the membrane. Functionally, functions as a phosphatidylcholine:diacylglycerol cholinephosphotransferase that catalyzes the transfer of the phosphocholine headgroup from phosphatidylcholine (PC) to diacylglycerol, a major reaction for the transfer of 18:1 into phosphatidylcholine for desaturation and also for the reverse transfer of 18:2 and 18:3 into the triacylglycerols synthesis pathway. In Arabidopsis thaliana (Mouse-ear cress), this protein is Phosphatidylcholine:diacylglycerol cholinephosphotransferase 2.